Here is a 901-residue protein sequence, read N- to C-terminus: Protein translocase subunit SecA (901 aa).

Residues Gln87, 105 to 109, and Asp512 contribute to the ATP site; that span reads GEGKT. A disordered region spans residues 859-901; sequence HQDDDSAAAAALAAQTGERKVGRNDPCPCGSGKKYKQCHGRLQ. Residues Cys885, Cys887, Cys896, and His897 each coordinate Zn(2+). A compositionally biased stretch (basic residues) spans 891-901; the sequence is KKYKQCHGRLQ.

The protein belongs to the SecA family. In terms of assembly, monomer and homodimer. Part of the essential Sec protein translocation apparatus which comprises SecA, SecYEG and auxiliary proteins SecDF-YajC and YidC. It depends on Zn(2+) as a cofactor.

Its subcellular location is the cell inner membrane. The protein resides in the cytoplasm. It carries out the reaction ATP + H2O + cellular proteinSide 1 = ADP + phosphate + cellular proteinSide 2.. Part of the Sec protein translocase complex. Interacts with the SecYEG preprotein conducting channel. Has a central role in coupling the hydrolysis of ATP to the transfer of proteins into and across the cell membrane, serving both as a receptor for the preprotein-SecB complex and as an ATP-driven molecular motor driving the stepwise translocation of polypeptide chains across the membrane. The protein is Protein translocase subunit SecA of Shigella dysenteriae serotype 1 (strain Sd197).